The sequence spans 574 residues: Meiotically up-regulated gene 72 protein (574 aa).

Positions 339-374 (VRAGTPQSSPNFNPAMRRSPVGAASRSPSRSTIGIS) are disordered. The residue at position 343 (Thr-343) is a Phosphothreonine. Polar residues predominate over residues 364-374 (RSPSRSTIGIS). Ser-392 bears the Phosphoserine mark. Disordered regions lie at residues 422 to 451 (TSPSGLNPTGRPSRFGGRVRGNPLTMNKAG) and 495 to 574 (RNRR…RRMD). Residues 541–554 (LYDTSRYPTRNSKP) are compositionally biased toward polar residues.

It localises to the cytoplasm. Has a role in meiosis. The polypeptide is Meiotically up-regulated gene 72 protein (mug72) (Schizosaccharomyces pombe (strain 972 / ATCC 24843) (Fission yeast)).